The primary structure comprises 469 residues: 3-isopropylmalate dehydratase large subunit (469 aa).

The [4Fe-4S] cluster site is built by Cys-350, Cys-410, and Cys-413.

Belongs to the aconitase/IPM isomerase family. LeuC type 1 subfamily. Heterodimer of LeuC and LeuD. It depends on [4Fe-4S] cluster as a cofactor.

It catalyses the reaction (2R,3S)-3-isopropylmalate = (2S)-2-isopropylmalate. Its pathway is amino-acid biosynthesis; L-leucine biosynthesis; L-leucine from 3-methyl-2-oxobutanoate: step 2/4. Functionally, catalyzes the isomerization between 2-isopropylmalate and 3-isopropylmalate, via the formation of 2-isopropylmaleate. The protein is 3-isopropylmalate dehydratase large subunit of Brucella melitensis biotype 2 (strain ATCC 23457).